The following is a 415-amino-acid chain: Gamma-glutamyl phosphate reductase (415 aa).

It belongs to the gamma-glutamyl phosphate reductase family.

The protein resides in the cytoplasm. The catalysed reaction is L-glutamate 5-semialdehyde + phosphate + NADP(+) = L-glutamyl 5-phosphate + NADPH + H(+). It functions in the pathway amino-acid biosynthesis; L-proline biosynthesis; L-glutamate 5-semialdehyde from L-glutamate: step 2/2. Functionally, catalyzes the NADPH-dependent reduction of L-glutamate 5-phosphate into L-glutamate 5-semialdehyde and phosphate. The product spontaneously undergoes cyclization to form 1-pyrroline-5-carboxylate. The protein is Gamma-glutamyl phosphate reductase of Salmonella dublin (strain CT_02021853).